A 232-amino-acid polypeptide reads, in one-letter code: Ion-translocating oxidoreductase complex subunit E (232 aa).

A run of 6 helical transmembrane segments spans residues 18–38 (GLVQLLGLCPLLAVTATLTNA), 39–59 (IGLGLATLVVLVGSNVLVSLV), 69–89 (IPVFVMIIAALVTCVQLLINA), 93–113 (GLYLSLGIFLPLIVTNCVIIG), 127–147 (AAFDGLMMGLGFTLVLMLLGA), and 182–202 (NFLLAMLPPGAFIAMGFLIAI).

It belongs to the NqrDE/RnfAE family. As to quaternary structure, the complex is composed of six subunits: RnfA, RnfB, RnfC, RnfD, RnfE and RnfG.

The protein resides in the cell inner membrane. Its function is as follows. Part of a membrane-bound complex that couples electron transfer with translocation of ions across the membrane. This Shewanella loihica (strain ATCC BAA-1088 / PV-4) protein is Ion-translocating oxidoreductase complex subunit E.